Reading from the N-terminus, the 72-residue chain is Protein SlyX homolog (72 aa).

This sequence belongs to the SlyX family.

This is Protein SlyX homolog from Bradyrhizobium diazoefficiens (strain JCM 10833 / BCRC 13528 / IAM 13628 / NBRC 14792 / USDA 110).